A 225-amino-acid polypeptide reads, in one-letter code: PKHD-type hydroxylase YbiX (225 aa).

The Fe2OG dioxygenase domain maps to 78 to 177 (TLSTPLFNRY…RVASFMWIQS (100 aa)). The Fe cation site is built by His-96, Asp-98, and His-158. Arg-168 serves as a coordination point for 2-oxoglutarate.

Fe(2+) serves as cofactor. L-ascorbate is required as a cofactor.

The sequence is that of PKHD-type hydroxylase YbiX from Shigella boydii serotype 4 (strain Sb227).